The following is a 286-amino-acid chain: ATP synthase gamma chain (286 aa).

Belongs to the ATPase gamma chain family. As to quaternary structure, F-type ATPases have 2 components, CF(1) - the catalytic core - and CF(0) - the membrane proton channel. CF(1) has five subunits: alpha(3), beta(3), gamma(1), delta(1), epsilon(1). CF(0) has three main subunits: a, b and c.

The protein localises to the cell membrane. Its function is as follows. Produces ATP from ADP in the presence of a proton gradient across the membrane. The gamma chain is believed to be important in regulating ATPase activity and the flow of protons through the CF(0) complex. This Mycoplasma mobile (strain ATCC 43663 / 163K / NCTC 11711) (Mesomycoplasma mobile) protein is ATP synthase gamma chain.